The primary structure comprises 607 residues: Chaperone protein DnaK (607 aa).

Residue Thr174 is modified to Phosphothreonine; by autocatalysis. The span at 577 to 594 (QSAGSTAGNPGQGQSTEN) shows a compositional bias: polar residues. The disordered stretch occupies residues 577–607 (QSAGSTAGNPGQGQSTENPGGKTIDGDYKVN).

Belongs to the heat shock protein 70 family.

Its function is as follows. Acts as a chaperone. The chain is Chaperone protein DnaK from Dictyoglomus turgidum (strain DSM 6724 / Z-1310).